The sequence spans 132 residues: Iron-sulfur cluster assembly 1 homolog, mitochondrial (132 aa).

A mitochondrion-targeting transit peptide spans 1–15 (MASSASSVVRATVRA). Fe cation is bound by residues Cys60, Cys124, and Cys126.

It belongs to the HesB/IscA family. Homooligomer, forming a rod-shaped structure 24 nm in length that may arise through a double-helical assembly of subunits. Interacts with CRY4; CRY4 seems to be associated with the outside of the rod-shaped homooligomer. Does not interact with CRY1 or CRY2. As to expression, detected in retina, especially in the retinal ganglion layer, the inner nuclear layer and the outer nuclear layer. Detected in retina visual pigment cells (at protein level).

It localises to the mitochondrion. In terms of biological role, involved in the maturation of mitochondrial 4Fe-4S proteins functioning late in the iron-sulfur cluster assembly pathway. Probably involved in the binding of an intermediate of Fe/S cluster assembly. Component of a putative magnetoreceptor complex formed by ISCA1 and CRY4, a member of the cryptochrome family that are known to be required for light-dependent magnetosensitivity in various orgnisms. The rod-like assembly may facilitate the perception of the Earth's weak magnetic field. Both ISCA1 and the complex with CRY4 have magnetic properties and are attracted to iron beads. When exposed to a magnetic field of 1 mT (superior to the natural magnetic field), over 50% of the rod-like complexes align more or less in parallel with the magnetic field at room temperature. The protein is Iron-sulfur cluster assembly 1 homolog, mitochondrial (ISCA1) of Columba livia (Rock dove).